The chain runs to 108 residues: TYRO protein tyrosine kinase-binding protein (108 aa).

The signal sequence occupies residues 1–25; sequence MGRLGPSNGLLPLLLAVGGFSLVQA. Topologically, residues 26 to 36 are extracellular; the sequence is QRECSCSAVSP. A helical membrane pass occupies residues 37 to 57; the sequence is GILAGIVLGDLVLTLLIALAV. Asp46 contributes to the Ca(2+) binding site. Over 58 to 108 the chain is Cytoplasmic; the sequence is YSLGRLVPRTRGAVDVTRKQHIAETESAYQELQGQRSDVYSDLNTQRQYYK. The ITAM domain occupies 75–103; sequence RKQHIAETESAYQELQGQRSDVYSDLNTQ. A phosphotyrosine mark is found at Tyr86 and Tyr97.

This sequence belongs to the TYROBP family. As to quaternary structure, homodimer; disulfide-linked. Homotrimer; disulfide-linked. Homotetramer; disulfide-linked. Homotrimers and homotetramers form when low levels of partner receptors are available and is competitive with assembly with interacting receptors. They may represent alternative oligomerization states or may be intermediates in the receptor assembly process. Binding of a metal cation aids in homooligomerization through coordination of the metal ion by the subunits of the oligomer. Interacts with TREM1. Interacts with TREM2. Interacts with CLECSF5. Interacts with CD300LB and CD300C2. Interacts with CD300E. Interacts (via ITAM domain) with SYK (via SH2 domains); activates SYK mediating neutrophils and macrophages integrin-mediated activation. Interacts with KLRC2. Interacts with CD300H. Interacts with KLRD1. Interacts with SIGLEC1. Post-translationally, following ligand binding by associated receptors, tyrosine phosphorylated in the ITAM domain which leads to activation of additional tyrosine kinases and subsequent cell activation. In terms of tissue distribution, highly expressed in spleen, liver and thymus. Weakly expressed in lymph nodes. Expressed in peripheral blood leukocytes, granulocytes, macrophages, and monocytes. LPS does not increase expression in granulocytes.

It localises to the cell membrane. Adapter protein which non-covalently associates with activating receptors found on the surface of a variety of immune cells to mediate signaling and cell activation following ligand binding by the receptors. TYROBP is tyrosine-phosphorylated in the ITAM domain following ligand binding by the associated receptors which leads to activation of additional tyrosine kinases and subsequent cell activation. Also has an inhibitory role in some cells. Non-covalently associates with activating receptors of the CD300 family to mediate cell activation. Also mediates cell activation through association with activating receptors of the CD200R family. Required for neutrophil activation mediated by integrin. Required for the activation of myeloid cells mediated by the CLEC5A/MDL1 receptor. Associates with natural killer (NK) cell receptors such as the KLRD1/KLRC2 heterodimer to mediate NK cell activation. Associates with TREM1 to mediate activation of neutrophils and monocytes. Associates with TREM2 on monocyte-derived dendritic cells to mediate up-regulation of chemokine receptor CCR7 and dendritic cell maturation and survival. Association with TREM2 mediates cytokine-induced formation of multinucleated giant cells which are formed by the fusion of macrophages. Stabilizes the TREM2 C-terminal fragment (TREM2-CTF) produced by TREM2 ectodomain shedding which suppresses the release of pro-inflammatory cytokines. In microglia, required with TREM2 for phagocytosis of apoptotic neurons. Required with ITGAM/CD11B in microglia to control production of microglial superoxide ions which promote the neuronal apoptosis that occurs during brain development. Promotes pro-inflammatory responses in microglia following nerve injury which accelerates degeneration of injured neurons. Positively regulates the expression of the IRAK3/IRAK-M kinase and IL10 production by liver dendritic cells and inhibits their T cell allosimulatory ability. Negatively regulates B cell proliferation. Required for CSF1-mediated osteoclast cytoskeletal organization. Positively regulates multinucleation during osteoclast development. This Sus scrofa (Pig) protein is TYRO protein tyrosine kinase-binding protein.